Consider the following 449-residue polypeptide: UDP-N-acetylmuramoylalanine--D-glutamate ligase (449 aa).

Position 107 to 113 (107 to 113) interacts with ATP; sequence GSNGKST.

The protein belongs to the MurCDEF family.

Its subcellular location is the cytoplasm. It catalyses the reaction UDP-N-acetyl-alpha-D-muramoyl-L-alanine + D-glutamate + ATP = UDP-N-acetyl-alpha-D-muramoyl-L-alanyl-D-glutamate + ADP + phosphate + H(+). Its pathway is cell wall biogenesis; peptidoglycan biosynthesis. In terms of biological role, cell wall formation. Catalyzes the addition of glutamate to the nucleotide precursor UDP-N-acetylmuramoyl-L-alanine (UMA). The polypeptide is UDP-N-acetylmuramoylalanine--D-glutamate ligase (Hydrogenovibrio crunogenus (strain DSM 25203 / XCL-2) (Thiomicrospira crunogena)).